Here is a 74-residue protein sequence, read N- to C-terminus: Large ribosomal subunit protein bL31 (74 aa).

Residues Cys16, Cys18, Cys38, and Cys41 each coordinate Zn(2+).

The protein belongs to the bacterial ribosomal protein bL31 family. Type A subfamily. In terms of assembly, part of the 50S ribosomal subunit. Zn(2+) is required as a cofactor.

Binds the 23S rRNA. The sequence is that of Large ribosomal subunit protein bL31 (rpmE) from Streptomyces coelicolor (strain ATCC BAA-471 / A3(2) / M145).